Consider the following 624-residue polypeptide: Iron transport multicopper oxidase FET3 (624 aa).

A signal peptide spans 1-20; that stretch reads MRTFLSSFIILTTFLASLIA. Topologically, residues 21-555 are extracellular; the sequence is AETHTWYFKT…KRLPTGFTTK (535 aa). Plastocyanin-like domains are found at residues 46-144 and 190-292; these read IGFN…FIIE and NFLF…LQVN. N-linked (GlcNAc...) asparagine glycans are attached at residues Asn49 and Asn77. 2 residues coordinate Cu cation: His81 and His83. N-linked (GlcNAc...) asparagine glycosylation occurs at Asn113. 2 residues coordinate Cu cation: His126 and His128. N-linked (GlcNAc...) asparagine glycosylation is found at Asn194, Asn198, Asn244, Asn265, Asn292, Asn300, and Asn359. Residues 382-499 form the Plastocyanin-like 3 domain; the sequence is NELIYGTNTN…QGLAVVLIED (118 aa). Residues His413, His416, and His418 each contribute to the Cu cation site. Asn441 carries an N-linked (GlcNAc...) asparagine glycan. Cu cation contacts are provided by His481, Cys482, His483, and His487. The chain crosses the membrane as a helical span at residues 556–576; the sequence is GIVALVFSCVAAFLGLFSFSF. The Cytoplasmic segment spans residues 577 to 624; sequence YGMNDIAHVEDKVARDLDIDLEAENEDEEEAVVLNQNSSSSDSNSKPH. Residues 603–624 form a disordered region; the sequence is DEEEAVVLNQNSSSSDSNSKPH. Residues 608–624 show a composition bias toward low complexity; it reads VVLNQNSSSSDSNSKPH.

This sequence belongs to the multicopper oxidase family. The cofactor is Cu cation.

It is found in the cell membrane. Iron transport multicopper ferroxidase required for Fe(2+) high affinity uptake. Required to oxidize Fe(2+) and release it from the transporter. Essential component of copper-dependent iron transport. The sequence is that of Iron transport multicopper oxidase FET3 (FET3) from Candida albicans (Yeast).